Reading from the N-terminus, the 434-residue chain is 4-hydroxy-3-methylbut-2-en-1-yl diphosphate synthase (flavodoxin) (434 aa).

Over residues 1-15 (MQSEAQSPRSSQICS) the composition is skewed to polar residues. Residues 1–24 (MQSEAQSPRSSQICSTEPVFGGHQ) are disordered. 4 residues coordinate [4Fe-4S] cluster: C322, C325, C368, and E375.

This sequence belongs to the IspG family. The cofactor is [4Fe-4S] cluster.

The catalysed reaction is (2E)-4-hydroxy-3-methylbut-2-enyl diphosphate + oxidized [flavodoxin] + H2O + 2 H(+) = 2-C-methyl-D-erythritol 2,4-cyclic diphosphate + reduced [flavodoxin]. It functions in the pathway isoprenoid biosynthesis; isopentenyl diphosphate biosynthesis via DXP pathway; isopentenyl diphosphate from 1-deoxy-D-xylulose 5-phosphate: step 5/6. Converts 2C-methyl-D-erythritol 2,4-cyclodiphosphate (ME-2,4cPP) into 1-hydroxy-2-methyl-2-(E)-butenyl 4-diphosphate. This is 4-hydroxy-3-methylbut-2-en-1-yl diphosphate synthase (flavodoxin) from Burkholderia ambifaria (strain MC40-6).